The chain runs to 180 residues: Signaling threshold-regulating transmembrane adapter 1 (180 aa).

Residues 1–24 (MSRDYNCTTDDQLAWGIPSISHAW) are Extracellular-facing. The N-linked (GlcNAc...) asparagine glycan is linked to N6. A helical; Signal-anchor for type III membrane protein membrane pass occupies residues 25–45 (GLWALLGVVTVLLLISLAALL). Residues 46–180 (SQWTRGRRRN…AYANSQPAPS (135 aa)) are Cytoplasmic-facing. Residues S63 and S66 each carry the phosphoserine modification. Y73 bears the Phosphotyrosine mark. An interaction with GRB2 region spans residues 73 to 76 (YGNL). The interval 81–103 (TGRLSQEPRSEEQDPPSSGGLAR) is disordered. S85 and S90 each carry phosphoserine. 3 positions are modified to phosphotyrosine: Y111, Y132, and Y153. Residues 130–135 (IKYCEV) form an interaction with PTPN11 region. Residues 153 to 156 (YASV) form an interaction with CSK region. S166 is subject to Phosphoserine. Y172 carries the post-translational modification Phosphotyrosine. The tract at residues 172 to 175 (YANS) is interaction with GRB2.

In terms of assembly, homodimer; disulfide-linked. When phosphorylated, interacts with PTPN11/SHP2, GRB2 and CSK. In terms of processing, phosphorylated on tyrosines upon TCR activation; which leads to the recruitment of PTPN11, GRB2 and CSK. In terms of tissue distribution, expressed in thymus and spleen, with highest levels in immature thymocytes (at protein level).

The protein resides in the cell membrane. In terms of biological role, negatively regulates T-cell antigen receptor (TCR)-mediated signaling. Involved in positive selection of T-cells. The protein is Signaling threshold-regulating transmembrane adapter 1 (Sit1) of Mus musculus (Mouse).